Here is a 130-residue protein sequence, read N- to C-terminus: Small ribosomal subunit protein uS8 (130 aa).

This sequence belongs to the universal ribosomal protein uS8 family. Part of the 30S ribosomal subunit. Contacts proteins S5 and S12.

One of the primary rRNA binding proteins, it binds directly to 16S rRNA central domain where it helps coordinate assembly of the platform of the 30S subunit. The protein is Small ribosomal subunit protein uS8 of Shewanella loihica (strain ATCC BAA-1088 / PV-4).